Consider the following 193-residue polypeptide: Frataxin, mitochondrial (193 aa).

The transit peptide at 1-72 (MIFNFLNKAS…KQQQQLSKSF (72 aa)) directs the protein to the mitochondrion.

Belongs to the frataxin family. In terms of assembly, monomer. Oligomer.

The protein localises to the mitochondrion. It carries out the reaction 4 Fe(2+) + O2 + 4 H(+) = 4 Fe(3+) + 2 H2O. Promotes the biosynthesis of heme as well as the assembly and repair of iron-sulfur clusters by delivering Fe(2+) to proteins involved in these pathways. May play a role in the protection against iron-catalyzed oxidative stress through its ability to catalyze the oxidation of Fe(2+) to Fe(3+). May be able to store large amounts of the metal in the form of a ferrihydrite mineral by oligomerization. The chain is Frataxin, mitochondrial (fxn) from Dictyostelium discoideum (Social amoeba).